Reading from the N-terminus, the 453-residue chain is Aryl hydrocarbon receptor nuclear translocator homolog (453 aa).

Residues 44 to 97 (FARENHSEIERRRRNKMTHYINELAEMVPQCASLGRKPDKLTILRMAVSHMKGI) form the bHLH domain. 2 PAS domains span residues 115–193 (DQEL…LDLK) and 277–347 (ASMP…LSDQ). The 45-residue stretch at 348-392 (PMRINIRVRTSTDYIPCTVSAYKFMNPYSEQFEYVVATHQIAPQE) folds into the PAC domain. Positions 410–453 (EFGELGGAPSAVDYGQSSSGGWRPEAQGAPQAQWQWDPMNGYNQ) are disordered.

Interacts with hif-1. Heterodimer; efficient DNA binding requires dimerization with another bHLH protein. Forms a heterodimer with ahr-1; binds DNA as heterodimer. Forms a heterodimer with PAS domain-containing protein cky-1; binds DNA as heterodimer. As to expression, expressed in many cell types throughout development, including hypodermal cells, intestinal cells, pharyngeal cells, and neurons. Expressed in every cell during embryo.

Its subcellular location is the nucleus. Its function is as follows. Transcription factor. Efficient DNA binding requires dimerization with another bHLH protein, such as cky-1 or ahr-1. Regulates transcription of target genes, probably acting in complex with cky-1. Has a role in cellular differentiation. Required for pharyngeal development. In collaboration with ahr-1 it is involved in RMEL/R and SDQR neuron cell migration. Acts in the cellular response to hypoxia. Involved in aggregation behavior by regulating soluble guanylate cyclase gene expression in the URX neurons. The polypeptide is Aryl hydrocarbon receptor nuclear translocator homolog (Caenorhabditis elegans).